A 334-amino-acid polypeptide reads, in one-letter code: Thiamine-binding periplasmic protein (334 aa).

An N-terminal signal peptide occupies residues 1 to 23; that stretch reads MRLLSLLTFSLFAVIGLAPAAQA. Residues 64–65, 166–167, W202, and 220–223 contribute to the thiamine site; these read DG, AT, and YTTS.

This sequence belongs to the bacterial solute-binding protein 1 family. The complex is composed of two ATP-binding proteins (ThiQ), two transmembrane proteins (ThiP) and a solute-binding protein (ThiB).

Its subcellular location is the periplasm. In terms of biological role, part of the ABC transporter complex ThiBPQ involved in thiamine import. The polypeptide is Thiamine-binding periplasmic protein (thiB) (Brucella abortus biovar 1 (strain 9-941)).